The following is a 352-amino-acid chain: MNTIVFNKLSGAVLFEDGGASERERGGRPYSGVLDSPHARPEVGIADGPPLKDNLGLRHRRTGARQNGGKVRHKRQALQDMARPLKQWLYKHRDNPYPTKTEKILLALGPQMTLVQVSNWFANARRRLKNTVRQPDLSWALRIKLYNKYVQGNAERLSVSSDDSCSEGGENPPRTHMNEGGYNTPVHHPVIKSENSVIKAGVRPESRASEDYVAPPKYKSSLLNRYLNDSLRHVMATNTTMMGKTRQRNHSGSFSSNEFEEELVSPSSSETEGNFVYRTDTLENGFNKGDSAANRKGPSKDDTYWKEINAAMALTNLAQGKDKLQGTTSCIIQKSSHIAEVKTVKVPLVQHF.

A disordered region spans residues G19–D53. The segment at residues V71–V132 is a DNA-binding region (homeobox; TALE-type). Disordered regions lie at residues L157–E194 and T245–E272.

This sequence belongs to the TALE/IRO homeobox family.

The protein localises to the nucleus. Functionally, may act as a morphogenetic regulator of cell adhesion. The sequence is that of Homeobox protein Mohawk (MKX) from Pongo abelii (Sumatran orangutan).